A 741-amino-acid polypeptide reads, in one-letter code: MLACNCIEPQWPADELLMKYQYISDFFIALAYFSIPLELIYFVKKSAVFPYRWVLVQFGAFIVLCGATHLINLWTFSIHSRTVAMVMTTAKVLTAVVSCATALMLVHIIPDLLSVKTRELFLKNKAAELDREMGLIRTQEETGRHVRMLTHEIRSTLDRHTILKTTLVELGRTLALEECALWMPTRTGLELQLSYTLRQQNPVGYTVPIHLPVINQVFSSNRAVKISANSPVAKLRQLAGRHIPGEVVAVRVPLLHLSNFQINDWPELSTKRYALMVLMLPSDSARQWHVHELELVEVVADQVAVALSHAAILEESMRARDLLMEQNIALDLARREAETAIRARNDFLAVMNHEMRTPMHAIIALSSLLQETELTAEQRLMVETILRSSNLLATLINDVLDLSRLEDGSLQLEIATFNLHSVFREVHNMIKPVASIKRLSVTLNIAADLPMYAIGDEKRLMQTILNVVGNAVKFSKEGSISITAFVAKSESLRDFRAPDFFPVQSDNHFYLRVQVKDSGSGINPQDIPKLFTKFAQTQALATRNSGGSGLGLAICKRFVNLMEGHIWIESEGLGKGCTATFIVKLGFPERSNESKLPFAPKLQANHVQTNFPGLKVLVMDDNGVSRSVTKGLLAHLGCDVTAVSLIDELLHVISQEHKVVFMDVSMPGIDGYELAVRIHEKFTKRHERPVLVALTGSIDKITKENCMRVGVDGVILKPVSVDKMRSVLSELLEHRVLFEAM.

Transmembrane regions (helical) follow at residues 23–43 (ISDFFIALAYFSIPLELIYFV), 53–73 (WVLVQFGAFIVLCGATHLINL), and 92–112 (VLTAVVSCATALMLVHIIPDL). C65 and H69 together coordinate Cu cation. The region spanning 158–307 (DRHTILKTTL…VVADQVAVAL (150 aa)) is the GAF domain. The region spanning 350–589 (VMNHEMRTPM…TFIVKLGFPE (240 aa)) is the Histidine kinase domain. H353 carries the phosphohistidine; by autocatalysis modification. Residues 615–732 (KVLVMDDNGV…KMRSVLSELL (118 aa)) form the Response regulatory domain. A 4-aspartylphosphate modification is found at D663.

The protein belongs to the ethylene receptor family. In terms of assembly, homodimer; disulfide-linked. Cu cation is required as a cofactor. Post-translationally, activation probably requires a transfer of a phosphate group between a His in the transmitter domain and an Asp of the receiver domain.

It is found in the endoplasmic reticulum membrane. It carries out the reaction ATP + protein L-histidine = ADP + protein N-phospho-L-histidine.. Functionally, may act early in the ethylene signal transduction pathway, possibly as an ethylene receptor, or as a regulator of the pathway. This chain is Ethylene receptor (ETR1), found in Malus domestica (Apple).